Here is a 264-residue protein sequence, read N- to C-terminus: Synaptophysin-like protein 2 (264 aa).

At 1–33 the chain is on the cytoplasmic side; sequence MSSTESPSRAADKSPRQQVDRLLEGLRWRRLEE. One can recognise an MARVEL domain in the interval 30–238; the sequence is RLEEPLGFIK…NCWFVFKETP (209 aa). Residues 34-54 form a helical membrane-spanning segment; that stretch reads PLGFIKVLQWLFAIFAFGSCG. The Vesicular segment spans residues 55-116; that stretch reads SYSGETGAMV…LMGDFSAPAE (62 aa). A helical membrane pass occupies residues 117–137; it reads FFVTLGIFSFFYTMAALVVYL. Topologically, residues 138–150 are cytoplasmic; it reads RFHKLYTENKRFP. A helical membrane pass occupies residues 151–171; sequence LVDFCVTVSFTFFWLVAAAAW. Residues 172–213 lie on the Vesicular side of the membrane; it reads GKGLTDVKGATRPSSLTAAMSVCHGEEAVCSAGATPSMGLAN. An N-linked (GlcNAc...) asparagine glycan is attached at Asn213. The chain crosses the membrane as a helical span at residues 214-234; the sequence is ISVLFGFINFFLWAGNCWFVF. Residues 235–264 lie on the Cytoplasmic side of the membrane; the sequence is KETPWHGQGQDQGQGPSQESAAEQGAVEKQ. The segment at 242-264 is disordered; the sequence is QGQDQGQGPSQESAAEQGAVEKQ.

It belongs to the synaptophysin/synaptobrevin family. Skeletal muscle.

It is found in the membrane. Its function is as follows. Involved in communication between the T-tubular and junctional sarcoplasmic reticulum (SR) membranes. This Oryctolagus cuniculus (Rabbit) protein is Synaptophysin-like protein 2 (SYPL2).